Here is a 59-residue protein sequence, read N- to C-terminus: Light-harvesting protein B-800-850 alpha chain E (59 aa).

At 1–11 the chain is on the cytoplasmic side; that stretch reads MNQGRIWTVVK. A helical transmembrane segment spans residues 12–35; it reads PTVGLPLLLGSVTVIAILVHFAVL. Residue H31 coordinates a bacteriochlorophyll. Residues 36–59 lie on the Periplasmic side of the membrane; that stretch reads SNTTWFSKYWNGKAAAIESSVSIG.

This sequence belongs to the antenna complex alpha subunit family. In terms of assembly, the core complex is formed by different alpha and beta chains, binding bacteriochlorophyll molecules, and arranged most probably in tetrameric structures disposed around the reaction center. The non-pigmented gamma chains may constitute additional components.

It localises to the cell inner membrane. In terms of biological role, antenna complexes are light-harvesting systems, which transfer the excitation energy to the reaction centers. In Rhodopseudomonas palustris (strain ATCC BAA-98 / CGA009), this protein is Light-harvesting protein B-800-850 alpha chain E (pucAE).